Reading from the N-terminus, the 425-residue chain is Lipoyl synthase, mitochondrial (425 aa).

The N-terminal 33 residues, 1–33 (MAASSTRLRCLYASSSTWKTSPSQSLISLSRRY), are a transit peptide targeting the mitochondrion. A disordered region spans residues 17–55 (TWKTSPSQSLISLSRRYATTSSAPPTPSDESSSTLPKRR). The span at 33–51 (YATTSSAPPTPSDESSSTL) shows a compositional bias: polar residues. C142, C147, C153, C173, C177, C180, and S388 together coordinate [4Fe-4S] cluster. One can recognise a Radical SAM core domain in the interval 156-377 (GSDKSAATAT…RQRALEMGFL (222 aa)).

This sequence belongs to the radical SAM superfamily. Lipoyl synthase family. Requires [4Fe-4S] cluster as cofactor.

Its subcellular location is the mitochondrion. The enzyme catalyses [[Fe-S] cluster scaffold protein carrying a second [4Fe-4S](2+) cluster] + N(6)-octanoyl-L-lysyl-[protein] + 2 oxidized [2Fe-2S]-[ferredoxin] + 2 S-adenosyl-L-methionine + 4 H(+) = [[Fe-S] cluster scaffold protein] + N(6)-[(R)-dihydrolipoyl]-L-lysyl-[protein] + 4 Fe(3+) + 2 hydrogen sulfide + 2 5'-deoxyadenosine + 2 L-methionine + 2 reduced [2Fe-2S]-[ferredoxin]. Its pathway is protein modification; protein lipoylation via endogenous pathway; protein N(6)-(lipoyl)lysine from octanoyl-[acyl-carrier-protein]: step 2/2. Functionally, catalyzes the radical-mediated insertion of two sulfur atoms into the C-6 and C-8 positions of the octanoyl moiety bound to the lipoyl domains of lipoate-dependent enzymes, thereby converting the octanoylated domains into lipoylated derivatives. This is Lipoyl synthase, mitochondrial from Talaromyces marneffei (strain ATCC 18224 / CBS 334.59 / QM 7333) (Penicillium marneffei).